The following is a 411-amino-acid chain: Dual-specificity RNA methyltransferase RlmN (411 aa).

The active-site Proton acceptor is the Glu-125. One can recognise a Radical SAM core domain in the interval 131–380 (EEGRGTLCIS…IRTPRGRDIL (250 aa)). A disulfide bridge connects residues Cys-138 and Cys-383. Cys-145, Cys-149, and Cys-152 together coordinate [4Fe-4S] cluster. S-adenosyl-L-methionine contacts are provided by residues 209 to 210 (GE), Ser-241, 263 to 265 (SLH), and Asn-340. The active-site S-methylcysteine intermediate is Cys-383.

Belongs to the radical SAM superfamily. RlmN family. It depends on [4Fe-4S] cluster as a cofactor.

It localises to the cytoplasm. It carries out the reaction adenosine(2503) in 23S rRNA + 2 reduced [2Fe-2S]-[ferredoxin] + 2 S-adenosyl-L-methionine = 2-methyladenosine(2503) in 23S rRNA + 5'-deoxyadenosine + L-methionine + 2 oxidized [2Fe-2S]-[ferredoxin] + S-adenosyl-L-homocysteine. The enzyme catalyses adenosine(37) in tRNA + 2 reduced [2Fe-2S]-[ferredoxin] + 2 S-adenosyl-L-methionine = 2-methyladenosine(37) in tRNA + 5'-deoxyadenosine + L-methionine + 2 oxidized [2Fe-2S]-[ferredoxin] + S-adenosyl-L-homocysteine. Its function is as follows. Specifically methylates position 2 of adenine 2503 in 23S rRNA and position 2 of adenine 37 in tRNAs. m2A2503 modification seems to play a crucial role in the proofreading step occurring at the peptidyl transferase center and thus would serve to optimize ribosomal fidelity. The chain is Dual-specificity RNA methyltransferase RlmN from Brucella canis (strain ATCC 23365 / NCTC 10854 / RM-666).